Reading from the N-terminus, the 461-residue chain is Kynurenine 3-monooxygenase (461 aa).

2 helical membrane-spanning segments follow: residues 395–415 (TIMNSIFPKSWIPLYSMVTFS) and 432–452 (ILSRIMTTTSTLALIGAAAGI).

Belongs to the aromatic-ring hydroxylase family. KMO subfamily. FAD serves as cofactor.

Its subcellular location is the mitochondrion. It localises to the membrane. It catalyses the reaction L-kynurenine + NADPH + O2 + H(+) = 3-hydroxy-L-kynurenine + NADP(+) + H2O. The protein operates within cofactor biosynthesis; NAD(+) biosynthesis; quinolinate from L-kynurenine: step 1/3. Its function is as follows. Catalyzes the hydroxylation of L-kynurenine (L-Kyn) to form 3-hydroxy-L-kynurenine (L-3OHKyn). Required for synthesis of quinolinic acid. This Caenorhabditis elegans protein is Kynurenine 3-monooxygenase.